The sequence spans 300 residues: Urease accessory protein UreD (300 aa).

The protein belongs to the UreD family. In terms of assembly, ureD, UreF and UreG form a complex that acts as a GTP-hydrolysis-dependent molecular chaperone, activating the urease apoprotein by helping to assemble the nickel containing metallocenter of UreC. The UreE protein probably delivers the nickel.

Its subcellular location is the cytoplasm. Functionally, required for maturation of urease via the functional incorporation of the urease nickel metallocenter. The sequence is that of Urease accessory protein UreD from Prochlorococcus marinus (strain AS9601).